Consider the following 424-residue polypeptide: Multifunctional CCA protein (424 aa).

Residues G8 and R11 each contribute to the ATP site. G8 and R11 together coordinate CTP. Residues D21 and D23 each coordinate Mg(2+). Residues R91, R149, and R152 each coordinate ATP. Residues R91, R149, and R152 each contribute to the CTP site. Positions 238–339 constitute an HD domain; that stretch reads TGIHLMMVLD…VRLLERCDAF (102 aa).

This sequence belongs to the tRNA nucleotidyltransferase/poly(A) polymerase family. Bacterial CCA-adding enzyme type 1 subfamily. In terms of assembly, monomer. Can also form homodimers and oligomers. Mg(2+) serves as cofactor. Requires Ni(2+) as cofactor.

The catalysed reaction is a tRNA precursor + 2 CTP + ATP = a tRNA with a 3' CCA end + 3 diphosphate. It carries out the reaction a tRNA with a 3' CCA end + 2 CTP + ATP = a tRNA with a 3' CCACCA end + 3 diphosphate. Catalyzes the addition and repair of the essential 3'-terminal CCA sequence in tRNAs without using a nucleic acid template. Adds these three nucleotides in the order of C, C, and A to the tRNA nucleotide-73, using CTP and ATP as substrates and producing inorganic pyrophosphate. tRNA 3'-terminal CCA addition is required both for tRNA processing and repair. Also involved in tRNA surveillance by mediating tandem CCA addition to generate a CCACCA at the 3' terminus of unstable tRNAs. While stable tRNAs receive only 3'-terminal CCA, unstable tRNAs are marked with CCACCA and rapidly degraded. The chain is Multifunctional CCA protein from Polaromonas naphthalenivorans (strain CJ2).